The chain runs to 1078 residues: Exportin-1 (1078 aa).

Residues 34–100 (AQQVLTQFQA…RNYIVAVMIK (67 aa)) enclose the Importin N-terminal domain.

This sequence belongs to the exportin family. In terms of assembly, interacts with php4.

It is found in the nucleus. Receptor for the leucine-rich nuclear export signal (NES). The protein is Exportin-1 (xpo1) of Schizosaccharomyces pombe (strain 972 / ATCC 24843) (Fission yeast).